The chain runs to 312 residues: Coiled-coil domain-containing protein 42 homolog (312 aa).

Coiled-coil stretches lie at residues R34 to E121 and A172 to Q233.

It belongs to the CFAP73 family.

This chain is Coiled-coil domain-containing protein 42 homolog, found in Nematostella vectensis (Starlet sea anemone).